The primary structure comprises 267 residues: 4-hydroxy-tetrahydrodipicolinate reductase (267 aa).

NAD(+) contacts are provided by residues 8–13 (GAAGRM) and Asp34. Arg35 contacts NADP(+). NAD(+) contacts are provided by residues 98-100 (GTT) and 122-125 (AANF). His155 (proton donor/acceptor) is an active-site residue. His156 serves as a coordination point for (S)-2,3,4,5-tetrahydrodipicolinate. The active-site Proton donor is the Lys159. Position 165-166 (165-166 (GT)) interacts with (S)-2,3,4,5-tetrahydrodipicolinate.

Belongs to the DapB family.

It is found in the cytoplasm. The catalysed reaction is (S)-2,3,4,5-tetrahydrodipicolinate + NAD(+) + H2O = (2S,4S)-4-hydroxy-2,3,4,5-tetrahydrodipicolinate + NADH + H(+). The enzyme catalyses (S)-2,3,4,5-tetrahydrodipicolinate + NADP(+) + H2O = (2S,4S)-4-hydroxy-2,3,4,5-tetrahydrodipicolinate + NADPH + H(+). Its pathway is amino-acid biosynthesis; L-lysine biosynthesis via DAP pathway; (S)-tetrahydrodipicolinate from L-aspartate: step 4/4. Its function is as follows. Catalyzes the conversion of 4-hydroxy-tetrahydrodipicolinate (HTPA) to tetrahydrodipicolinate. The protein is 4-hydroxy-tetrahydrodipicolinate reductase of Ectopseudomonas mendocina (strain ymp) (Pseudomonas mendocina).